Here is a 353-residue protein sequence, read N- to C-terminus: Major outer membrane protein (353 aa).

A signal peptide spans 1-20; sequence MKKTIVALAVAAVAATSANA.

Disulfide bond interactions within and between MOMP molecules and other components form high molecular-weight oligomers.

Its subcellular location is the cell outer membrane. Functionally, structural rigidity of the outer membrane of elementary bodies and porin forming, permitting diffusion of solutes through the intracellular reticulate body membrane. The protein is Major outer membrane protein (ompH) of Pasteurella multocida.